The sequence spans 139 residues: Trafficking protein particle complex subunit 2-like protein (139 aa).

It belongs to the TRAPP small subunits family. Sedlin subfamily. Component of the multisubunit TRAPP (transport protein particle) complex, which includes at least TRAPPC2, TRAPPC2L, TRAPPC3, TRAPPC3L, TRAPPC4, TRAPPC5, TRAPPC8, TRAPPC9, TRAPPC10, TRAPPC11 and TRAPPC12. Interacts with the heterodimer TRAPPC3-TRAPPC6A.

Its subcellular location is the cytoplasm. It localises to the perinuclear region. It is found in the endoplasmic reticulum. The protein localises to the golgi apparatus. Its function is as follows. May play a role in vesicular transport from endoplasmic reticulum to Golgi. The protein is Trafficking protein particle complex subunit 2-like protein (TRAPPC2L) of Bos taurus (Bovine).